Reading from the N-terminus, the 226-residue chain is MGIRAIVVDTAGTTTDLNFIEDVLFPYSAKALPAFLEENQNNVLVDNCICDVQDIALEPDASLARVTEILLQWIEEDRKATPLKTIQGLIWKQGYANGEFTGHIFPDFIEALDGYKQQGLRVYSFSSGSVEAQKLLFSHSDAGDLNDKFNGHFDTRTGNKRFKQAYSNIVNTISLSPKQILFVSDVLEELKAANEAGLHVVQMVRDDSQRTGDFKTIASFDELKID.

Belongs to the HAD-like hydrolase superfamily. MasA/MtnC family. Monomer. It depends on Mg(2+) as a cofactor.

The enzyme catalyses 5-methylsulfanyl-2,3-dioxopentyl phosphate + H2O = 1,2-dihydroxy-5-(methylsulfanyl)pent-1-en-3-one + phosphate. It participates in amino-acid biosynthesis; L-methionine biosynthesis via salvage pathway; L-methionine from S-methyl-5-thio-alpha-D-ribose 1-phosphate: step 3/6. It functions in the pathway amino-acid biosynthesis; L-methionine biosynthesis via salvage pathway; L-methionine from S-methyl-5-thio-alpha-D-ribose 1-phosphate: step 4/6. In terms of biological role, bifunctional enzyme that catalyzes the enolization of 2,3-diketo-5-methylthiopentyl-1-phosphate (DK-MTP-1-P) into the intermediate 2-hydroxy-3-keto-5-methylthiopentenyl-1-phosphate (HK-MTPenyl-1-P), which is then dephosphorylated to form the acireductone 1,2-dihydroxy-3-keto-5-methylthiopentene (DHK-MTPene). This chain is Enolase-phosphatase E1, found in Shewanella pealeana (strain ATCC 700345 / ANG-SQ1).